Consider the following 42-residue polypeptide: Photosystem I reaction center subunit IX (42 aa).

The chain crosses the membrane as a helical span at residues 7–27 (FLSSAPVLIMALLTFTAGILI).

This sequence belongs to the PsaJ family.

The protein resides in the cellular thylakoid membrane. In terms of biological role, may help in the organization of the PsaE and PsaF subunits. The protein is Photosystem I reaction center subunit IX of Microcystis aeruginosa (strain NIES-843 / IAM M-2473).